The primary structure comprises 607 residues: Elongation factor 4 (607 aa).

The tr-type G domain maps to 6 to 188; sequence SRIRNFSIIA…AIVARIPPPR (183 aa). GTP contacts are provided by residues 18–23 and 135–138; these read DHGKST and NKID.

The protein belongs to the TRAFAC class translation factor GTPase superfamily. Classic translation factor GTPase family. LepA subfamily.

Its subcellular location is the cell inner membrane. It catalyses the reaction GTP + H2O = GDP + phosphate + H(+). Its function is as follows. Required for accurate and efficient protein synthesis under certain stress conditions. May act as a fidelity factor of the translation reaction, by catalyzing a one-codon backward translocation of tRNAs on improperly translocated ribosomes. Back-translocation proceeds from a post-translocation (POST) complex to a pre-translocation (PRE) complex, thus giving elongation factor G a second chance to translocate the tRNAs correctly. Binds to ribosomes in a GTP-dependent manner. This Sphingopyxis alaskensis (strain DSM 13593 / LMG 18877 / RB2256) (Sphingomonas alaskensis) protein is Elongation factor 4.